The primary structure comprises 198 residues: Small ribosomal subunit protein uS11 (198 aa).

2 stretches are compositionally biased toward low complexity: residues 1 to 11 (MSGTEAGAGEP) and 19 to 58 (EAAQ…TAQP). 2 disordered regions span residues 1–72 (MSGT…TPAD) and 178–198 (DVTP…GRRV). Residues 187–198 (TRKKGGKRGRRV) show a composition bias toward basic residues.

This sequence belongs to the universal ribosomal protein uS11 family. In terms of assembly, part of the 30S ribosomal subunit.

Located on the platform of the 30S subunit. The polypeptide is Small ribosomal subunit protein uS11 (Cenarchaeum symbiosum (strain A)).